The chain runs to 317 residues: Transaldolase (317 aa).

Lys-126 serves as the catalytic Schiff-base intermediate with substrate.

This sequence belongs to the transaldolase family. Type 1 subfamily. In terms of assembly, homodimer.

The protein localises to the cytoplasm. It catalyses the reaction D-sedoheptulose 7-phosphate + D-glyceraldehyde 3-phosphate = D-erythrose 4-phosphate + beta-D-fructose 6-phosphate. It functions in the pathway carbohydrate degradation; pentose phosphate pathway; D-glyceraldehyde 3-phosphate and beta-D-fructose 6-phosphate from D-ribose 5-phosphate and D-xylulose 5-phosphate (non-oxidative stage): step 2/3. Functionally, transaldolase is important for the balance of metabolites in the pentose-phosphate pathway. This is Transaldolase from Burkholderia ambifaria (strain MC40-6).